An 82-amino-acid chain; its full sequence is RNA-binding protein Hfq (82 aa).

The Sm domain maps to 10 to 70 (DIFLNGARKN…LSTITPSKAI (61 aa)).

Belongs to the Hfq family. As to quaternary structure, homohexamer.

In terms of biological role, RNA chaperone that binds small regulatory RNA (sRNAs) and mRNAs to facilitate mRNA translational regulation in response to envelope stress, environmental stress and changes in metabolite concentrations. Also binds with high specificity to tRNAs. This is RNA-binding protein Hfq from Clostridium kluyveri (strain NBRC 12016).